Consider the following 378-residue polypeptide: Putative methyltransferase spot-1 (378 aa).

It belongs to the class IV-like SAM-binding methyltransferase superfamily.

The protein resides in the cytoplasm. Its subcellular location is the cytoskeleton. The protein localises to the spindle. It localises to the chromosome. It is found in the centromere. The protein resides in the kinetochore. Its subcellular location is the microtubule organizing center. The protein localises to the centrosome. Functionally, required for association of the centrosomes with the poles of the bipolar mitotic spindle during metaphase. In Caenorhabditis elegans, this protein is Putative methyltransferase spot-1.